A 439-amino-acid polypeptide reads, in one-letter code: Innexin-19 (439 aa).

Transmembrane regions (helical) follow at residues 33-53, 103-123, 199-219, and 285-305; these read PLILAVCCLVISAKQYGGTPI, QWVPFILIAEALMFSLPCIFW, IVYSFTKLLYSVNVVAQFFIL, and VFAFLWCWYMILAIITTCSFI.

This sequence belongs to the pannexin family.

The protein localises to the cell membrane. Its subcellular location is the cell junction. It is found in the gap junction. Functionally, structural component of the gap junctions that specifically coordinates left-right asymmetry in the developing nervous system. Acts by forming gap junction network linking embryonic neurons and providing electrical coupling between cells, leading to promote or inhibit AWC signaling. The sequence is that of Innexin-19 (inx-19) from Caenorhabditis briggsae.